We begin with the raw amino-acid sequence, 513 residues long: GMP synthase [glutamine-hydrolyzing] (513 aa).

The Glutamine amidotransferase type-1 domain occupies 8-198 (MILVLDFGSQ…VFGVCDCDGK (191 aa)). The Nucleophile role is filled by C85. Residues H172 and E174 contribute to the active site. The GMPS ATP-PPase domain occupies 199–388 (WSMENFIEIE…LGIPDDIVWR (190 aa)). 226-232 (SGGVDSS) contributes to the ATP binding site.

As to quaternary structure, homodimer.

It catalyses the reaction XMP + L-glutamine + ATP + H2O = GMP + L-glutamate + AMP + diphosphate + 2 H(+). The protein operates within purine metabolism; GMP biosynthesis; GMP from XMP (L-Gln route): step 1/1. Functionally, catalyzes the synthesis of GMP from XMP. The protein is GMP synthase [glutamine-hydrolyzing] of Bacillus pumilus (strain SAFR-032).